Consider the following 121-residue polypeptide: Small ribosomal subunit protein uS13 (121 aa).

Positions 94 to 121 (GLPVRGQNTKNNARTRKGPRRTVANKKK) are disordered. Basic residues predominate over residues 106-121 (ARTRKGPRRTVANKKK).

The protein belongs to the universal ribosomal protein uS13 family. Part of the 30S ribosomal subunit. Forms a loose heterodimer with protein S19. Forms two bridges to the 50S subunit in the 70S ribosome.

Located at the top of the head of the 30S subunit, it contacts several helices of the 16S rRNA. In the 70S ribosome it contacts the 23S rRNA (bridge B1a) and protein L5 of the 50S subunit (bridge B1b), connecting the 2 subunits; these bridges are implicated in subunit movement. Contacts the tRNAs in the A and P-sites. This is Small ribosomal subunit protein uS13 from Geobacillus kaustophilus (strain HTA426).